We begin with the raw amino-acid sequence, 384 residues long: MDLFRKPKKRNAPVVRKKESSSDEDQDSEVKDVIQKRRRTNPMVQSTKQLDASTRRADNSSDDSDDSDDNQDIAVATHSFAASGDAGPSGPRDQGATATLEVDTDYSHDAQAQFERVQQQLKEGVEKDGKILYKGSALYGAKEAKDTAKGNAASGYNRVGPVRAPQFLRQTVRWDFAPDICKDYKETGFCTFGDSCKFVHDRSDYKHGWEIDEEYEAGKYGAEDDANYEIHEGDDTFPEDCFICGNPFVDPIVTKCKHYFCTGCALKSFQKSSKCPICQQNTENIMNTAKELLTYLKRKKQQQKQEAEKQEEEKDSDDDEKPHECDDHHHHDHEDEPEEPENDSNVPEAEEKSDEEQEIMMEDVEGLEGGENDSESDDDDAEKD.

Basic residues predominate over residues 1–11 (MDLFRKPKKRN). The disordered stretch occupies residues 1–96 (MDLFRKPKKR…GPSGPRDQGA (96 aa)). Residues 42 to 52 (PMVQSTKQLDA) show a composition bias toward polar residues. Residues 60–71 (SSDDSDDSDDNQ) are compositionally biased toward acidic residues. The C3H1-type zinc-finger motif lies at 175 to 203 (DFAPDICKDYKETGFCTFGDSCKFVHDRS). The segment at 241–279 (CFICGNPFVDPIVTKCKHYFCTGCALKSFQKSSKCPICQ) adopts an RING-type zinc-finger fold. Residues 299–384 (KKQQQKQEAE…ESDDDDAEKD (86 aa)) form a disordered region. 2 stretches are compositionally biased toward basic and acidic residues: residues 303–312 (QKQEAEKQEE) and 320–334 (EKPH…HDHE). The segment covering 351–384 (EKSDEEQEIMMEDVEGLEGGENDSESDDDDAEKD) has biased composition (acidic residues).

It catalyses the reaction S-ubiquitinyl-[E2 ubiquitin-conjugating enzyme]-L-cysteine + [acceptor protein]-L-lysine = [E2 ubiquitin-conjugating enzyme]-L-cysteine + N(6)-ubiquitinyl-[acceptor protein]-L-lysine.. It functions in the pathway protein modification; protein ubiquitination. May function as E3 ubiquitin-protein ligase that catalyzes the transfer of ubiquitin onto target proteins. May play a role in DNA repair via its role in the synthesis of 'Lys-63'-linked polyubiquitin chains that recruit proteins involved in repair to sites of DNA damage by alkylating agents. This chain is Probable E3 ubiquitin-protein ligase rnf113 (rnf-113), found in Caenorhabditis elegans.